The chain runs to 444 residues: C4-dicarboxylate transport protein 2 (444 aa).

The next 6 helical transmembrane spans lie at 23–43 (ILYVQVLAAIVLGVIVGWLWP), 61–81 (LIKMAIAPIIFCTVVSGIAHI), 95–115 (LVYFEVVSTFALALGLVVANV), 162–182 (GEILQVLLFAILFGFALMGLG), 198–218 (AMFGVISIVVKVAPIGAFGAM), and 236–256 (LIATFYLTAFLFVVVGLGIIA).

It belongs to the dicarboxylate/amino acid:cation symporter (DAACS) (TC 2.A.23) family.

The protein localises to the cell inner membrane. Responsible for the transport of dicarboxylates such as succinate, fumarate, and malate from the periplasm across the membrane. This chain is C4-dicarboxylate transport protein 2, found in Bradyrhizobium diazoefficiens (strain JCM 10833 / BCRC 13528 / IAM 13628 / NBRC 14792 / USDA 110).